The chain runs to 426 residues: Isocitrate dehydrogenase [NADP] (426 aa).

Residues serine 123, asparagine 125, arginine 129, arginine 139, and arginine 162 each contribute to the D-threo-isocitrate site. Mg(2+) is bound at residue aspartate 312. Residues 344–350 (HGTAWDI), asparagine 357, and lysine 404 contribute to the NADP(+) site.

The protein belongs to the isocitrate and isopropylmalate dehydrogenases family. In terms of assembly, homodimer. Mg(2+) serves as cofactor. It depends on Mn(2+) as a cofactor.

The catalysed reaction is D-threo-isocitrate + NADP(+) = 2-oxoglutarate + CO2 + NADPH. Catalyzes the oxidative decarboxylation of isocitrate to 2-oxoglutarate and carbon dioxide with the concomitant reduction of NADP(+). This chain is Isocitrate dehydrogenase [NADP] (icd), found in Aquifex aeolicus (strain VF5).